Here is a 442-residue protein sequence, read N- to C-terminus: Serine--tRNA ligase (442 aa).

Position 249–251 (249–251 (TSE)) interacts with L-serine. Residue 280 to 282 (RSE) participates in ATP binding. An L-serine-binding site is contributed by E303. Residue 367–370 (EISS) coordinates ATP. S402 provides a ligand contact to L-serine.

The protein belongs to the class-II aminoacyl-tRNA synthetase family. Type-1 seryl-tRNA synthetase subfamily. In terms of assembly, homodimer. The tRNA molecule binds across the dimer.

The protein localises to the cytoplasm. It carries out the reaction tRNA(Ser) + L-serine + ATP = L-seryl-tRNA(Ser) + AMP + diphosphate + H(+). The enzyme catalyses tRNA(Sec) + L-serine + ATP = L-seryl-tRNA(Sec) + AMP + diphosphate + H(+). Its pathway is aminoacyl-tRNA biosynthesis; selenocysteinyl-tRNA(Sec) biosynthesis; L-seryl-tRNA(Sec) from L-serine and tRNA(Sec): step 1/1. In terms of biological role, catalyzes the attachment of serine to tRNA(Ser). Is also able to aminoacylate tRNA(Sec) with serine, to form the misacylated tRNA L-seryl-tRNA(Sec), which will be further converted into selenocysteinyl-tRNA(Sec). The sequence is that of Serine--tRNA ligase from Acidovorax ebreus (strain TPSY) (Diaphorobacter sp. (strain TPSY)).